Consider the following 871-residue polypeptide: Isoleucine--tRNA ligase (871 aa).

A 'HIGH' region motif is present at residues 57-67; sequence PYANGNLHMGH. Glu554 lines the L-isoleucyl-5'-AMP pocket. A 'KMSKS' region motif is present at residues 595–599; the sequence is KMSKS. Lys598 contributes to the ATP binding site.

It belongs to the class-I aminoacyl-tRNA synthetase family. IleS type 1 subfamily. In terms of assembly, monomer.

It is found in the cytoplasm. The catalysed reaction is tRNA(Ile) + L-isoleucine + ATP = L-isoleucyl-tRNA(Ile) + AMP + diphosphate. Catalyzes the attachment of isoleucine to tRNA(Ile). As IleRS can inadvertently accommodate and process structurally similar amino acids such as valine, to avoid such errors it has two additional distinct tRNA(Ile)-dependent editing activities. One activity is designated as 'pretransfer' editing and involves the hydrolysis of activated Val-AMP. The other activity is designated 'posttransfer' editing and involves deacylation of mischarged Val-tRNA(Ile). The polypeptide is Isoleucine--tRNA ligase (Staphylococcus epidermidis).